Here is a 173-residue protein sequence, read N- to C-terminus: MARVEL domain-containing protein 1 (173 aa).

M1 bears the N-acetylmethionine mark. At 1 to 29 (MLPPPPRQPPPQARAARGAVRLQRPFLRS) the chain is on the cytoplasmic side. In terms of domain architecture, MARVEL spans 26–166 (FLRSPLGVLR…SALYGCGRRC (141 aa)). Residues 30-50 (PLGVLRLLQLLAGAAFWITIA) traverse the membrane as a helical segment. At 51 to 59 (TSKYQGPVH) the chain is on the extracellular side. Residues 60 to 80 (FALFVSVLFWLLTLGLYFLTL) traverse the membrane as a helical segment. At 81–94 (LGKHELVPVLGSRW) the chain is on the cytoplasmic side. Residues 95 to 115 (LMVNVAHDVLAAALYGAATGI) traverse the membrane as a helical segment. The Extracellular segment spans residues 116–138 (MSDQMQRHSYCNLKDYPLPCAYH). Residues 139–159 (AFLAAAVCGGVCHGLYLLSAL) traverse the membrane as a helical segment. The Cytoplasmic segment spans residues 160 to 173 (YGCGRRCQGKQEVA).

As to expression, widely expressed in normal tissues. Down-regulated in multiple primary tumors.

It is found in the cell membrane. Its subcellular location is the cytoplasm. The protein resides in the cytoskeleton. It localises to the nucleus. Its function is as follows. Microtubule-associated protein that exhibits cell cycle-dependent localization and can inhibit cell proliferation and migration. In Homo sapiens (Human), this protein is MARVEL domain-containing protein 1 (MARVELD1).